The following is a 607-amino-acid chain: UvrABC system protein C (607 aa).

A GIY-YIG domain is found at 16–94 (GRPGVYRMFD…IKEWRPPYNI (79 aa)). The region spanning 203-238 (QQLGNELNAEMEKAAMALDFEKAAELRDQIALLRRV) is the UVR domain.

The protein belongs to the UvrC family. As to quaternary structure, interacts with UvrB in an incision complex.

It localises to the cytoplasm. Functionally, the UvrABC repair system catalyzes the recognition and processing of DNA lesions. UvrC both incises the 5' and 3' sides of the lesion. The N-terminal half is responsible for the 3' incision and the C-terminal half is responsible for the 5' incision. The chain is UvrABC system protein C from Pseudomonas putida (strain ATCC 47054 / DSM 6125 / CFBP 8728 / NCIMB 11950 / KT2440).